The sequence spans 550 residues: MSTYSIPYYNQMNGNYNNGMPQQTTAANQQAFPQQQQPTTTGNASQQQQQAAATAAAAAVQQPYNYMFYQQQGQPGQQTGQTAGQQQQQQQQQQQYDYNTYNRYQYPAATSQGNYYQQTIPNQLSQPQPQHYNGSNRNYTSAPSGAPIPSNSTSGPSQQPPLPGQQAVPIPPHVSTMQQPTPVQDTLNASSTSTVGQFQPPGIRPRVTTTMWEDEKTLCYQVDANNVSVVRRADNNMINGTKLLNVAQMTRGRRDGILKSEKVRHVVKIGSMHLKGVWIPFERALAMAQREQIVDMLYPLFVRDIKRVIQTGVTPNAAAATAAAAATATSASAPPPPPPPVAAATTTAATAISKSSSGNGNSISATSGGSNVSGASGAGSTTSPVNTKAATTAGTPQGNYYQTYNQQQYPQQYGQYNAPGKNQNTPASQPGSTTNDQYLQQQQQMYGYQSNYYQGGAANSSYYPNYYQQQQPNYASSYPYQQQQQKQQQQQPNQQQQSDQQQTSTPSGGAGTRSVHQSPQVQSLTQGSVHPSPQQHQANQSASTVAKEEK.

Disordered stretches follow at residues 17–48 (NNGM…SQQQ), 72–95 (QGQP…QQQQ), and 123–182 (QLSQ…QPTP). The span at 123 to 153 (QLSQPQPQHYNGSNRNYTSAPSGAPIPSNST) shows a compositional bias: polar residues. Threonine 181 and threonine 208 each carry phosphothreonine. Residues 206–312 (RVTTTMWEDE…RDIKRVIQTG (107 aa)) enclose the HTH APSES-type domain. The segment at residues 240-261 (GTKLLNVAQMTRGRRDGILKSE) is a DNA-binding region (H-T-H motif). Disordered stretches follow at residues 329–435 (TSAS…STTN) and 476–550 (SSYP…KEEK). Residues 342–383 (AAATTTAATAISKSSSGNGNSISATSGGSNVSGASGAGSTTS) are compositionally biased toward low complexity. Positions 384–394 (PVNTKAATTAG) are enriched in polar residues. Over residues 395 to 416 (TPQGNYYQTYNQQQYPQQYGQY) the composition is skewed to low complexity. A compositionally biased stretch (polar residues) spans 420-435 (GKNQNTPASQPGSTTN). Over residues 476–502 (SSYPYQQQQQKQQQQQPNQQQQSDQQQ) the composition is skewed to low complexity. Residues 514-544 (SVHQSPQVQSLTQGSVHPSPQQHQANQSAST) show a composition bias toward polar residues.

This sequence belongs to the EFG1/PHD1/stuA family. As to quaternary structure, interacts with CZF1 and FLO8. Post-translationally, thr-208 is a phosphorylation target to promote hyphal induction by a subset of environmental cues. Phosphorylation at Thr-181 by the CDc28/HGC1 complex represses cell separation genes and leads to hyphal chain formation.

Its subcellular location is the nucleus. Functionally, transcriptional regulator of the switch between 2 heritable states, the white and opaque states. These 2 cell types differ in many characteristics, including cell structure, mating competence, and virulence. Each state is heritable for many generations, and switching between states occurs stochastically, at low frequency. Antagonizes the action of WOR1, WOR2 and CZF1, and promotes the white state. In white cells, EFG1 represses WOR1 indirectly through WOR2 to maintain white cell identity. Binds target gene promoters at the EFG1 recognition sequence (EGRbox) TATGCATA. Acts as a major regulator of cell wall dynamics and plays a role in interactions with extracellular matrices. Required for TOR1-dependent cellular aggregation and adhesin expression. Required for both normoxic and hypoxic biofilm formation. Hypoxic biofilm formation is a major cause of perseverance and antifungal resistance during infections. Contributes to virulence by regulating hyphal formation and the factors that enable C.albicans to invade and injure endothelial cells. Required for the formation of thick-walled big resting spores called chlamydospores, which survive in unfavorable conditions. Mediates the expression of virulence factors SAP4, SAP5and SAP6 during infection. Involved in drug resistance by regulating the expression of ERG3. The sequence is that of Enhanced filamentous growth protein 1 (EFG1) from Candida albicans (strain SC5314 / ATCC MYA-2876) (Yeast).